We begin with the raw amino-acid sequence, 256 residues long: Protein FixA (256 aa).

Belongs to the ETF beta-subunit/FixA family. Heterodimer of FixA and FixB.

It functions in the pathway amine and polyamine metabolism; carnitine metabolism. Its function is as follows. Required for anaerobic carnitine reduction. May bring reductant to CaiA. This is Protein FixA from Escherichia coli O6:H1 (strain CFT073 / ATCC 700928 / UPEC).